The following is a 208-amino-acid chain: Protein-L-isoaspartate O-methyltransferase (208 aa).

S59 is a catalytic residue.

The protein belongs to the methyltransferase superfamily. L-isoaspartyl/D-aspartyl protein methyltransferase family.

It localises to the cytoplasm. It catalyses the reaction [protein]-L-isoaspartate + S-adenosyl-L-methionine = [protein]-L-isoaspartate alpha-methyl ester + S-adenosyl-L-homocysteine. Functionally, catalyzes the methyl esterification of L-isoaspartyl residues in peptides and proteins that result from spontaneous decomposition of normal L-aspartyl and L-asparaginyl residues. It plays a role in the repair and/or degradation of damaged proteins. In Cronobacter sakazakii (strain ATCC BAA-894) (Enterobacter sakazakii), this protein is Protein-L-isoaspartate O-methyltransferase.